We begin with the raw amino-acid sequence, 216 residues long: ATP synthase subunit C lysine N-methyltransferase (216 aa).

Met1 bears the N-acetylmethionine mark. The span at 1-12 (MERGETPEEERQ) shows a compositional bias: basic and acidic residues. The disordered stretch occupies residues 1–25 (MERGETPEEERQSGCVLPTSPESDS). Residues 31–50 (WGFLITGVIGGALVTVYAVT) traverse the membrane as a helical segment. The segment at 51 to 85 (TPFIAPALRKVCLPFVPATSRQVENVVKMLQHRRG) is required for mitochondrial location.

It belongs to the ANT/ATPSC lysine N-methyltransferase family.

The protein localises to the mitochondrion membrane. It catalyses the reaction L-lysyl-[protein] + 3 S-adenosyl-L-methionine = N(6),N(6),N(6)-trimethyl-L-lysyl-[protein] + 3 S-adenosyl-L-homocysteine + 3 H(+). Functionally, mitochondrial protein-lysine N-methyltransferase that trimethylates ATP synthase subunit C, ATP5MC1 and ATP5MC2. Trimethylation is required for proper incorporation of the C subunit into the ATP synthase complex and mitochondrial respiration. Promotes chronic pain. Involved in persistent inflammatory and neuropathic pain: methyltransferase activity in the mitochondria of sensory neurons promotes chronic pain via a pathway that depends on the production of reactive oxygen species (ROS) and on the engagement of spinal cord microglia. In Rattus norvegicus (Rat), this protein is ATP synthase subunit C lysine N-methyltransferase (Atpsckmt).